A 439-amino-acid chain; its full sequence is tRNA modification GTPase MnmE (439 aa).

3 residues coordinate (6S)-5-formyl-5,6,7,8-tetrahydrofolate: Arg-20, Glu-78, and Lys-116. The TrmE-type G domain maps to 211–364; it reads GIYVAILGEP…LLSAIQKKVE (154 aa). GTP-binding positions include 221-226, 240-246, and 265-268; these read NSGKST, SEYAGTT, and DTAG. Residues Ser-225 and Thr-246 each contribute to the Mg(2+) site. Position 439 (Lys-439) interacts with (6S)-5-formyl-5,6,7,8-tetrahydrofolate.

The protein belongs to the TRAFAC class TrmE-Era-EngA-EngB-Septin-like GTPase superfamily. TrmE GTPase family. Homodimer. Heterotetramer of two MnmE and two MnmG subunits. Requires K(+) as cofactor.

The protein localises to the cytoplasm. Its function is as follows. Exhibits a very high intrinsic GTPase hydrolysis rate. Involved in the addition of a carboxymethylaminomethyl (cmnm) group at the wobble position (U34) of certain tRNAs, forming tRNA-cmnm(5)s(2)U34. The protein is tRNA modification GTPase MnmE of Ehrlichia ruminantium (strain Welgevonden).